The following is a 262-amino-acid chain: Putative protein-methionine-sulfoxide reductase subunit YedZ1 (262 aa).

The protein belongs to the MsrP family.

Functionally, part of the YedY1-YedZ1 system that may repair oxidized proteins containing methionine sulfoxide residues (Met-O). This is Putative protein-methionine-sulfoxide reductase subunit YedZ1 from Azospira oryzae (strain ATCC BAA-33 / DSM 13638 / PS) (Dechlorosoma suillum).